The chain runs to 434 residues: dTDP-D-glucose 4,6-dehydratase (434 aa).

Thr-134 is a substrate binding site. Asp-135 functions as the Proton donor in the catalytic mechanism. Catalysis depends on proton acceptor residues Glu-136 and Tyr-169. Residues 286 to 309 (NNNNNNNNNNNNNNNNNNNNNNNN) show a composition bias toward low complexity. A disordered region spans residues 286-310 (NNNNNNNNNNNNNNNNNNNNNNNND).

Belongs to the NAD(P)-dependent epimerase/dehydratase family. dTDP-glucose dehydratase subfamily. NAD(+) is required as a cofactor.

It carries out the reaction dTDP-alpha-D-glucose = dTDP-4-dehydro-6-deoxy-alpha-D-glucose + H2O. The chain is dTDP-D-glucose 4,6-dehydratase (tgds) from Dictyostelium discoideum (Social amoeba).